A 92-amino-acid polypeptide reads, in one-letter code: Large ribosomal subunit protein eL31 (92 aa).

The protein belongs to the eukaryotic ribosomal protein eL31 family.

The polypeptide is Large ribosomal subunit protein eL31 (Desulfurococcus amylolyticus (strain DSM 18924 / JCM 16383 / VKM B-2413 / 1221n) (Desulfurococcus kamchatkensis)).